A 98-amino-acid polypeptide reads, in one-letter code: Large ribosomal subunit protein eL21 (98 aa).

Residues 1–24 (MVKKAHSFRRKTRGKLSKHPRRRG) are compositionally biased toward basic residues. The segment at 1 to 27 (MVKKAHSFRRKTRGKLSKHPRRRGLPP) is disordered.

Belongs to the eukaryotic ribosomal protein eL21 family. As to quaternary structure, part of the 50S ribosomal subunit.

This is Large ribosomal subunit protein eL21 from Thermococcus kodakarensis (strain ATCC BAA-918 / JCM 12380 / KOD1) (Pyrococcus kodakaraensis (strain KOD1)).